The chain runs to 810 residues: Calpain-3 (810 aa).

Residues 9 to 27 (VAQQTAAGSVPSTTSTTTE) are compositionally biased toward low complexity. The segment at 9 to 31 (VAQQTAAGSVPSTTSTTTEGTGG) is disordered. A Calpain catalytic domain is found at 68 to 410 (LYEDPDFPPN…FTKLEICNLT (343 aa)). Catalysis depends on residues Cys123, His327, and Asn351. The segment at 411–579 (PDTLEADKLQ…KRSLSEEVEN (169 aa)) is domain III. The tract at residues 578–639 (ENMIEADRPS…SAKAREKSEE (62 aa)) is disordered. Residues 580-638 (MIEADRPSKKKKGKPIIFVSDRANSNKELTTDEDAGKDGEKTHVDEKKRSSAKAREKSE) form a linker region. Positions 613–639 (DAGKDGEKTHVDEKKRSSAKAREKSEE) are enriched in basic and acidic residues. EF-hand domains follow at residues 638 to 672 (EEET…VVKK), 681 to 714 (FELE…DKIK), 711 to 746 (DKIK…AGFR), and 776 to 810 (VRLD…TMYA). Residues 639-809 (EETQFRNIFR…VLEWLQLTMY (171 aa)) are domain IV. Ca(2+)-binding residues include Ala651, Asp654, Glu656, Glu661, Asp694, Asp696, Ser698, Lys700, Glu705, Asp724, Asp726, Ser728, Thr730, Glu735, Asp789, Asp791, Asp793, and Ile795.

The protein belongs to the peptidase C2 family. In terms of assembly, homodimer; via EF-hand domain 4. Interacts with TTN/titin. Interacts with CMYA5; this interaction, which results in CMYA5 proteolysis, may protect CAPN3 from autolysis. Interacts with SIMC1. Interacts with UTP25; the interaction is required for CAPN3 translocation to the nucleolus. As to expression, skeletal muscle. Low levels in spleen, intestine and bone.

The protein resides in the cytoplasm. The protein localises to the nucleus. It localises to the nucleolus. It catalyses the reaction Broad endopeptidase activity.. Its activity is regulated as follows. Activated by micromolar concentrations of calcium and inhibited by calpastatin. In terms of biological role, calcium-regulated non-lysosomal thiol-protease. Proteolytically cleaves CTBP1. Mediates, with UTP25, the proteasome-independent degradation of p53/TP53. The sequence is that of Calpain-3 (CAPN3) from Gallus gallus (Chicken).